A 337-amino-acid chain; its full sequence is tRNA N6-adenosine threonylcarbamoyltransferase (337 aa).

The Fe cation site is built by H111 and H115. Substrate-binding positions include 134–138, D167, G180, and N272; that span reads LVSGG. Fe cation is bound at residue D300.

It belongs to the KAE1 / TsaD family. The cofactor is Fe(2+).

The protein localises to the cytoplasm. It catalyses the reaction L-threonylcarbamoyladenylate + adenosine(37) in tRNA = N(6)-L-threonylcarbamoyladenosine(37) in tRNA + AMP + H(+). Functionally, required for the formation of a threonylcarbamoyl group on adenosine at position 37 (t(6)A37) in tRNAs that read codons beginning with adenine. Is involved in the transfer of the threonylcarbamoyl moiety of threonylcarbamoyl-AMP (TC-AMP) to the N6 group of A37, together with TsaE and TsaB. TsaD likely plays a direct catalytic role in this reaction. This is tRNA N6-adenosine threonylcarbamoyltransferase from Escherichia coli O157:H7.